A 472-amino-acid polypeptide reads, in one-letter code: L-fuculokinase (472 aa).

This sequence belongs to the FGGY kinase family. A divalent metal cation serves as cofactor.

The enzyme catalyses L-fuculose + ATP = L-fuculose 1-phosphate + ADP + H(+). It participates in carbohydrate degradation; L-fucose degradation; L-lactaldehyde and glycerone phosphate from L-fucose: step 2/3. Functionally, catalyzes the phosphorylation of L-fuculose. Can also phosphorylate, with lower efficiency, D-ribulose, D-xylulose and D-fructose. The chain is L-fuculokinase from Escherichia coli (strain K12).